A 481-amino-acid chain; its full sequence is Aspartyl/glutamyl-tRNA(Asn/Gln) amidotransferase subunit B (481 aa).

The protein belongs to the GatB/GatE family. GatB subfamily. As to quaternary structure, heterotrimer of A, B and C subunits.

The enzyme catalyses L-glutamyl-tRNA(Gln) + L-glutamine + ATP + H2O = L-glutaminyl-tRNA(Gln) + L-glutamate + ADP + phosphate + H(+). It carries out the reaction L-aspartyl-tRNA(Asn) + L-glutamine + ATP + H2O = L-asparaginyl-tRNA(Asn) + L-glutamate + ADP + phosphate + 2 H(+). Allows the formation of correctly charged Asn-tRNA(Asn) or Gln-tRNA(Gln) through the transamidation of misacylated Asp-tRNA(Asn) or Glu-tRNA(Gln) in organisms which lack either or both of asparaginyl-tRNA or glutaminyl-tRNA synthetases. The reaction takes place in the presence of glutamine and ATP through an activated phospho-Asp-tRNA(Asn) or phospho-Glu-tRNA(Gln). The polypeptide is Aspartyl/glutamyl-tRNA(Asn/Gln) amidotransferase subunit B (Ehrlichia chaffeensis (strain ATCC CRL-10679 / Arkansas)).